A 123-amino-acid chain; its full sequence is Small ribosomal subunit protein uS12c (123 aa).

The protein belongs to the universal ribosomal protein uS12 family. Part of the 30S ribosomal subunit.

It is found in the plastid. The protein resides in the chloroplast. Functionally, with S4 and S5 plays an important role in translational accuracy. Located at the interface of the 30S and 50S subunits. The polypeptide is Small ribosomal subunit protein uS12c (rps12) (Anthoceros angustus (Hornwort)).